Consider the following 341-residue polypeptide: tRNA N6-adenosine threonylcarbamoyltransferase (341 aa).

Residues H115 and H119 each coordinate Fe cation. Substrate is bound by residues 138 to 142 (VVSGG), D171, G184, D188, and N279. A Fe cation-binding site is contributed by D307.

Belongs to the KAE1 / TsaD family. It depends on Fe(2+) as a cofactor.

It is found in the cytoplasm. It catalyses the reaction L-threonylcarbamoyladenylate + adenosine(37) in tRNA = N(6)-L-threonylcarbamoyladenosine(37) in tRNA + AMP + H(+). Functionally, required for the formation of a threonylcarbamoyl group on adenosine at position 37 (t(6)A37) in tRNAs that read codons beginning with adenine. Is involved in the transfer of the threonylcarbamoyl moiety of threonylcarbamoyl-AMP (TC-AMP) to the N6 group of A37, together with TsaE and TsaB. TsaD likely plays a direct catalytic role in this reaction. This Clostridium novyi (strain NT) protein is tRNA N6-adenosine threonylcarbamoyltransferase.